The sequence spans 282 residues: Succinate dehydrogenase [ubiquinone] iron-sulfur subunit, mitochondrial (282 aa).

Residues 1-26 constitute a mitochondrion transit peptide; sequence MAAVVFSLRRSGPVLRLSGALQVSRG. The 2Fe-2S ferredoxin-type domain maps to 42 to 135; the sequence is KKFAIYRWDP…VSKIYPLPHM (94 aa). Residues Cys95, Cys100, Cys103, and Cys115 each coordinate [2Fe-2S] cluster. The 31-residue stretch at 178–208 folds into the 4Fe-4S ferredoxin-type domain; it reads DRDKLDGLYECILCACCSTSCPSYWWNADKY. The [4Fe-4S] cluster site is built by Cys188, Cys191, and Cys194. Cys198 contacts [3Fe-4S] cluster. Trp203 serves as a coordination point for a ubiquinone. Residues Cys245 and Cys251 each coordinate [3Fe-4S] cluster. Cys255 serves as a coordination point for [4Fe-4S] cluster.

The protein belongs to the succinate dehydrogenase/fumarate reductase iron-sulfur protein family. Component of complex II composed of four subunits: the flavoprotein (FP) sdha, iron-sulfur protein (IP) sdhb, and a cytochrome b composed of sdhc and sdhd. [2Fe-2S] cluster is required as a cofactor. [3Fe-4S] cluster serves as cofactor. Requires [4Fe-4S] cluster as cofactor.

Its subcellular location is the mitochondrion inner membrane. It catalyses the reaction a quinone + succinate = fumarate + a quinol. It carries out the reaction (R)-malate + a quinone = enol-oxaloacetate + a quinol. The catalysed reaction is (S)-malate + a quinone = enol-oxaloacetate + a quinol. It participates in carbohydrate metabolism; tricarboxylic acid cycle; fumarate from succinate (eukaryal route): step 1/1. Its activity is regulated as follows. Enol-oxaloacetate inhibits the succinate dehydrogenase activity. Its function is as follows. Iron-sulfur protein (IP) subunit of the succinate dehydrogenase complex (mitochondrial respiratory chain complex II), responsible for transferring electrons from succinate to ubiquinone (coenzyme Q). SDH also oxidizes malate to the non-canonical enol form of oxaloacetate, enol-oxaloacetate. Enol-oxaloacetate, which is a potent inhibitor of the succinate dehydrogenase activity, is further isomerized into keto-oxaloacetate. The protein is Succinate dehydrogenase [ubiquinone] iron-sulfur subunit, mitochondrial (sdhb) of Xenopus laevis (African clawed frog).